The chain runs to 1228 residues: DNA-directed RNA polymerase subunit beta (1228 aa).

This sequence belongs to the RNA polymerase beta chain family. The RNAP catalytic core consists of 2 alpha, 1 beta, 1 beta' and 1 omega subunit. When a sigma factor is associated with the core the holoenzyme is formed, which can initiate transcription.

It catalyses the reaction RNA(n) + a ribonucleoside 5'-triphosphate = RNA(n+1) + diphosphate. Functionally, DNA-dependent RNA polymerase catalyzes the transcription of DNA into RNA using the four ribonucleoside triphosphates as substrates. This is DNA-directed RNA polymerase subunit beta from Leptospira biflexa.